The sequence spans 348 residues: Uroporphyrinogen decarboxylase (348 aa).

Substrate is bound by residues 27 to 31, Phe-46, Asp-76, Tyr-152, Ser-207, and His-320; that span reads RQAGR.

It belongs to the uroporphyrinogen decarboxylase family. Homodimer.

The protein resides in the cytoplasm. It catalyses the reaction uroporphyrinogen III + 4 H(+) = coproporphyrinogen III + 4 CO2. The protein operates within porphyrin-containing compound metabolism; protoporphyrin-IX biosynthesis; coproporphyrinogen-III from 5-aminolevulinate: step 4/4. In terms of biological role, catalyzes the decarboxylation of four acetate groups of uroporphyrinogen-III to yield coproporphyrinogen-III. The chain is Uroporphyrinogen decarboxylase from Bacillus mycoides (strain KBAB4) (Bacillus weihenstephanensis).